The chain runs to 510 residues: Rab proteins geranylgeranyltransferase component A 1 (510 aa).

It belongs to the Rab GDI family. May interact with rab-5, rab-7 and rab-11. Does not interact with rab-3, rab-27 and rab-10. As to expression, expressed in several neurons including head neurons, motor neurons located in the ventral nerve cord, HSN and CAN neurons, and tail neurons, and in muscles such as body-wall, pharyngeal, intestinal and anal sphincter. Also expressed in seam cells, the hypodermis and the intestine.

It is found in the cytoplasm. Substrate-binding subunit of the Rab geranylgeranyltransferase (GGTase) complex. Binds unprenylated Rab proteins and presents the substrate peptide to the catalytic component B and remains bound to it after the geranylgeranyl transfer reaction. The component A is thought to be regenerated by transferring its prenylated Rab back to the donor membrane. Plays a role in neurotransmitter release from presynaptic terminals at neuromuscular junctions. Positively regulates the function of rab-27 in synaptic transmission most likely through mediating rab-27 prenylation. This chain is Rab proteins geranylgeranyltransferase component A 1, found in Caenorhabditis elegans.